Reading from the N-terminus, the 506-residue chain is NAD(P)H-quinone oxidoreductase subunit 2, chloroplastic (506 aa).

13 helical membrane passes run 15 to 35, 39 to 59, 84 to 104, 113 to 133, 137 to 157, 172 to 192, 217 to 237, 249 to 269, 283 to 303, 339 to 359, 382 to 402, 418 to 438, and 471 to 491; these read LIPEGIVACTILLVLLLDLVY, CHAWLAWVAMAGLSLASVLLG, LSLVFRAIIAMSCVLCILLSI, APSEFLVLIATASLGGMLVAG, LLMMFVSLETLGLASYLLTGY, LLVGAASSGLFLYGISWMYGI, CALALVLMTVGVGFKVAAAPF, PTPVVAFLSVGSKAAGFILAV, WHLIFTILSILSMIVGNFIAV, IVYLLIYLFMNLGAFACVILF, ALCLSLCLLSLGGIPPLAGFF, SLVWVGLITSVVSIYYYLSVV, and VGIFVCVLGSILVGVAGNSMV.

This sequence belongs to the complex I subunit 2 family. NDH is composed of at least 16 different subunits, 5 of which are encoded in the nucleus.

It localises to the plastid. It is found in the chloroplast thylakoid membrane. It catalyses the reaction a plastoquinone + NADH + (n+1) H(+)(in) = a plastoquinol + NAD(+) + n H(+)(out). The catalysed reaction is a plastoquinone + NADPH + (n+1) H(+)(in) = a plastoquinol + NADP(+) + n H(+)(out). NDH shuttles electrons from NAD(P)H:plastoquinone, via FMN and iron-sulfur (Fe-S) centers, to quinones in the photosynthetic chain and possibly in a chloroplast respiratory chain. The immediate electron acceptor for the enzyme in this species is believed to be plastoquinone. Couples the redox reaction to proton translocation, and thus conserves the redox energy in a proton gradient. In Nephroselmis olivacea (Green alga), this protein is NAD(P)H-quinone oxidoreductase subunit 2, chloroplastic.